We begin with the raw amino-acid sequence, 391 residues long: Metallophosphoesterase 1 (391 aa).

A helical membrane pass occupies residues threonine 25–phenylalanine 45. The a divalent metal cation site is built by aspartate 72, aspartate 114, asparagine 152, histidine 244, histidine 298, and histidine 300. The helical transmembrane segment at valine 352–glutamate 372 threads the bilayer.

The protein belongs to the metallophosphoesterase superfamily. MPPE1 family. Interacts with GPI-anchor proteins (via the GPI portion). Interacts with TMED10. Mn(2+) is required as a cofactor.

The protein localises to the endoplasmic reticulum-Golgi intermediate compartment membrane. In terms of biological role, metallophosphoesterase that catalyzes the removal of a side-chain ethanolamine-phosphate (EtNP) from the second mannose of the GPI-anchor protein intermediate. Participates in the glycan remodeling steps of GPI-anchor maturation to allow an efficient transport of GPI-anchor proteins from the endoplasmic reticulum to the Golgi. The chain is Metallophosphoesterase 1 from Cricetulus griseus (Chinese hamster).